Here is a 191-residue protein sequence, read N- to C-terminus: Protein GrpE (191 aa).

The segment covering 1 to 11 has biased composition (basic and acidic residues); sequence MTDSSNAHEAE. Disordered stretches follow at residues 1–22 and 172–191; these read MTDS…DNEI and KVSK…NNNE.

Belongs to the GrpE family. Homodimer.

It is found in the cytoplasm. Participates actively in the response to hyperosmotic and heat shock by preventing the aggregation of stress-denatured proteins, in association with DnaK and GrpE. It is the nucleotide exchange factor for DnaK and may function as a thermosensor. Unfolded proteins bind initially to DnaJ; upon interaction with the DnaJ-bound protein, DnaK hydrolyzes its bound ATP, resulting in the formation of a stable complex. GrpE releases ADP from DnaK; ATP binding to DnaK triggers the release of the substrate protein, thus completing the reaction cycle. Several rounds of ATP-dependent interactions between DnaJ, DnaK and GrpE are required for fully efficient folding. The sequence is that of Protein GrpE from Chlamydia abortus (strain DSM 27085 / S26/3) (Chlamydophila abortus).